We begin with the raw amino-acid sequence, 305 residues long: Dihydroorotate dehydrogenase B (NAD(+)), catalytic subunit (305 aa).

FMN contacts are provided by residues Ser20 and 44-45 (KG). Substrate-binding positions include Lys44 and 68–72 (NAIGI). Residues Asn98 and Asn126 each contribute to the FMN site. Asn126 lines the substrate pocket. The Nucleophile role is filled by Cys129. Positions 165 and 191 each coordinate FMN. A substrate-binding site is contributed by 192–193 (NT). FMN contacts are provided by residues Gly217, 243-244 (GG), and 265-266 (GT).

The protein belongs to the dihydroorotate dehydrogenase family. Type 1 subfamily. In terms of assembly, heterotetramer of 2 PyrK and 2 PyrD type B subunits. FMN is required as a cofactor.

Its subcellular location is the cytoplasm. The catalysed reaction is (S)-dihydroorotate + NAD(+) = orotate + NADH + H(+). The protein operates within pyrimidine metabolism; UMP biosynthesis via de novo pathway; orotate from (S)-dihydroorotate (NAD(+) route): step 1/1. Catalyzes the conversion of dihydroorotate to orotate with NAD(+) as electron acceptor. This chain is Dihydroorotate dehydrogenase B (NAD(+)), catalytic subunit (pyrD), found in Maridesulfovibrio salexigens (strain ATCC 14822 / DSM 2638 / NCIMB 8403 / VKM B-1763) (Desulfovibrio salexigens).